The chain runs to 440 residues: Ribulose bisphosphate carboxylase large chain (440 aa).

Lys4 is modified (N6,N6,N6-trimethyllysine). Positions 113 and 163 each coordinate substrate. The Proton acceptor role is filled by Lys165. Lys167 is a substrate binding site. Positions 191, 193, and 194 each coordinate Mg(2+). Residue Lys191 is modified to N6-carboxylysine. Residue His284 is the Proton acceptor of the active site. Residues Arg285, His317, and Ser369 each coordinate substrate.

Belongs to the RuBisCO large chain family. Type I subfamily. As to quaternary structure, heterohexadecamer of 8 large chains and 8 small chains; disulfide-linked. The disulfide link is formed within the large subunit homodimers. It depends on Mg(2+) as a cofactor. The disulfide bond which can form in the large chain dimeric partners within the hexadecamer appears to be associated with oxidative stress and protein turnover.

The protein localises to the plastid. The protein resides in the chloroplast. It catalyses the reaction 2 (2R)-3-phosphoglycerate + 2 H(+) = D-ribulose 1,5-bisphosphate + CO2 + H2O. The catalysed reaction is D-ribulose 1,5-bisphosphate + O2 = 2-phosphoglycolate + (2R)-3-phosphoglycerate + 2 H(+). In terms of biological role, ruBisCO catalyzes two reactions: the carboxylation of D-ribulose 1,5-bisphosphate, the primary event in carbon dioxide fixation, as well as the oxidative fragmentation of the pentose substrate in the photorespiration process. Both reactions occur simultaneously and in competition at the same active site. The chain is Ribulose bisphosphate carboxylase large chain from Polystichum munitum (Western sword-fern).